Consider the following 488-residue polypeptide: L-amino oxidase (488 aa).

Residues 60–61, 80–81, Arg88, and 104–107 each bind FAD; these read MS, EA, and GPMR. Residues Arg107 and Tyr388 each contribute to the substrate site. Cys347 and Cys428 are joined by a disulfide. Residues Glu474 and 481-486 each bind FAD; that span reads GWIDST. Position 481–482 (481–482) interacts with substrate; the sequence is GW.

This sequence belongs to the flavin monoamine oxidase family. FIG1 subfamily. In terms of assembly, monomer. This is in contrast with most of its orthologs, that are non-covalently linked homodimers. The cofactor is FAD. N-glycosylated. In terms of tissue distribution, expressed by the venom gland.

The protein localises to the secreted. It carries out the reaction an L-alpha-amino acid + O2 + H2O = a 2-oxocarboxylate + H2O2 + NH4(+). It catalyses the reaction L-leucine + O2 + H2O = 4-methyl-2-oxopentanoate + H2O2 + NH4(+). Its function is as follows. Catalyzes an oxidative deamination of predominantly hydrophobic and aromatic L-amino acids, thus producing hydrogen peroxide that may contribute to the diverse toxic effects of this enzyme. Shows activity on L-Leu. Exhibits diverse biological activities, such as hemorrhage, hemolysis, edema, antibacterial and antiparasitic activities, as well as regulation of platelet aggregation. When tested on SW480 and SW620 human colon cancer cells, shows inhibition of cell proliferation, and induction of apoptosis, which is probably a consequence of the increased caspase-3 activity and the decreased Bcl-2 expression. The protein is L-amino oxidase of Trimeresurus purpureomaculatus (Mangrove pit viper).